The primary structure comprises 300 residues: Mitochondrial carnitine/acylcarnitine carrier-like protein (300 aa).

3 Solcar repeats span residues 2 to 93 (ADAW…MEGL), 102 to 201 (LTIS…FKRF), and 211 to 298 (LGQG…TRSS). 6 helical membrane passes run 8-28 (LASG…FDTI), 64-84 (GLYK…AVLF), 108-128 (FVAG…TELI), 176-195 (GLFP…FAAY), 211-231 (LGQG…WGIV), and 273-292 (GFGP…FLAY).

The protein belongs to the mitochondrial carrier (TC 2.A.29) family. As to expression, high expression in cotyledons, leaves, flowers and developing siliques. Lower expression in roots and maturing siliques. Not detected in meristematic tissues.

The protein localises to the mitochondrion inner membrane. Involved in photorespiratory metabolism. Acts probably as a carrier for a glycine decarboxylase (GDC) cofactor or, alternatively, may act as a mitochondrial glycine shuttle. Involved in the transition from the embryonic stage to the juvenile autotrophic stage. This chain is Mitochondrial carnitine/acylcarnitine carrier-like protein (BOU), found in Arabidopsis thaliana (Mouse-ear cress).